A 506-amino-acid polypeptide reads, in one-letter code: 2-isopropylmalate synthase (506 aa).

In terms of domain architecture, Pyruvate carboxyltransferase spans 4-266; it reads ILFMDTTLRD…EPSMTLKEIK (263 aa). 4 residues coordinate Mn(2+): aspartate 13, histidine 201, histidine 203, and asparagine 237. A regulatory domain region spans residues 390 to 506; it reads NITQLQVHFV…KLKSFIQLVK (117 aa).

This sequence belongs to the alpha-IPM synthase/homocitrate synthase family. LeuA type 1 subfamily. Homodimer. Requires Mn(2+) as cofactor.

The protein resides in the cytoplasm. The catalysed reaction is 3-methyl-2-oxobutanoate + acetyl-CoA + H2O = (2S)-2-isopropylmalate + CoA + H(+). It participates in amino-acid biosynthesis; L-leucine biosynthesis; L-leucine from 3-methyl-2-oxobutanoate: step 1/4. Catalyzes the condensation of the acetyl group of acetyl-CoA with 3-methyl-2-oxobutanoate (2-ketoisovalerate) to form 3-carboxy-3-hydroxy-4-methylpentanoate (2-isopropylmalate). In Bacillus thuringiensis (strain Al Hakam), this protein is 2-isopropylmalate synthase.